The sequence spans 310 residues: Transcription factor UNE12 (310 aa).

Disordered regions lie at residues 124-156 and 229-253; these read HGQP…ATDP and SSSV…WSND. Residues 152–201 enclose the bHLH domain; that stretch reads QATDPHSIAERLRRERIAERIRALQELVPTVNKTDRAAMIDEIVDYVKFL.

In terms of assembly, homodimer. As to expression, expressed constitutively in roots, leaves, stems, and flowers.

The protein localises to the nucleus. Functionally, required for ovule fertilization. This Arabidopsis thaliana (Mouse-ear cress) protein is Transcription factor UNE12 (UNE12).